Reading from the N-terminus, the 280-residue chain is Golgi to ER traffic protein 2 (280 aa).

3 stretches are compositionally biased toward basic and acidic residues: residues 1 to 17, 44 to 62, and 71 to 80; these read MSLSEAEKRKILRERRQ, SALDEKPEVVEEIPREAVK, and AKKESTAQAK. The interval 1–80 is disordered; sequence MSLSEAEKRK…AKKESTAQAK (80 aa). Residues 1–146 are Cytoplasmic-facing; sequence MSLSEAEKRK…VEYHKYRVNT (146 aa). A helical transmembrane segment spans residues 147–166; sequence LTAKTTLVKWIVLLAYIFLL. Residues 167–191 are Lumenal-facing; that stretch reads TRTDDTYFPFVVRSYLPEVFTSQSS. The helical transmembrane segment at 192 to 211 threads the bilayer; that stretch reads FFSIFLTFEILATSIYYQLS. Over 212 to 258 the chain is Cytoplasmic; sequence VGVERETGVKTLQDTSKIVSLVSMVPEGILPIADLRGKVILAMKYWN. Residues 259 to 279 form a helical membrane-spanning segment; sequence IIAMMIGDVCFVLVAIGLVSQ. Position 280 (Ile-280) is a topological domain, lumenal.

The protein belongs to the GET2 family. Component of the Golgi to ER traffic (GET) complex, which is composed of GET1, GET2 and GET3. Within the complex, GET1 and GET2 form a heterotetramer which is stabilized by phosphatidylinositol binding and which binds to the GET3 homodimer.

It is found in the endoplasmic reticulum membrane. The protein resides in the golgi apparatus membrane. In terms of biological role, required for the post-translational delivery of tail-anchored (TA) proteins to the endoplasmic reticulum. Together with GET1, acts as a membrane receptor for soluble GET3, which recognizes and selectively binds the transmembrane domain of TA proteins in the cytosol. The GET complex cooperates with the HDEL receptor ERD2 to mediate the ATP-dependent retrieval of resident ER proteins that contain a C-terminal H-D-E-L retention signal from the Golgi to the ER. This chain is Golgi to ER traffic protein 2, found in Candida glabrata (strain ATCC 2001 / BCRC 20586 / JCM 3761 / NBRC 0622 / NRRL Y-65 / CBS 138) (Yeast).